Here is a 78-residue protein sequence, read N- to C-terminus: uncharacterized protein (78 aa).

Residues 1 to 78 (MSSNSNTDHS…VDLEGPKDEQ (78 aa)) form a disordered region. Composition is skewed to basic and acidic residues over residues 10 to 33 (STGD…ETES) and 63 to 78 (LNLK…KDEQ).

This is an uncharacterized protein from Schizosaccharomyces pombe (strain 972 / ATCC 24843) (Fission yeast).